The primary structure comprises 128 residues: MEIGKKYELNPHRIKSFIDISSSNANMVGIIQENGGWFEVKSILSLDGFDYVTEIICANGEIYNDDGMGDDYFELSEEEFYCFREYKEPTSEEDKVEDKVYDVTKIHCIVDENNVDEIIELLRKTFKA.

This is an uncharacterized protein from Escherichia coli (Bacteriophage LZ1).